Consider the following 941-residue polypeptide: Isoleucine--tRNA ligase (941 aa).

Positions 58–68 (PYANGNIHLGH) match the 'HIGH' region motif. Glu-564 is an L-isoleucyl-5'-AMP binding site. A 'KMSKS' region motif is present at residues 605-609 (KMSKS). Lys-608 contacts ATP. Zn(2+)-binding residues include Cys-904, Cys-907, Cys-924, and Cys-927.

Belongs to the class-I aminoacyl-tRNA synthetase family. IleS type 1 subfamily. In terms of assembly, monomer. The cofactor is Zn(2+).

The protein localises to the cytoplasm. It carries out the reaction tRNA(Ile) + L-isoleucine + ATP = L-isoleucyl-tRNA(Ile) + AMP + diphosphate. In terms of biological role, catalyzes the attachment of isoleucine to tRNA(Ile). As IleRS can inadvertently accommodate and process structurally similar amino acids such as valine, to avoid such errors it has two additional distinct tRNA(Ile)-dependent editing activities. One activity is designated as 'pretransfer' editing and involves the hydrolysis of activated Val-AMP. The other activity is designated 'posttransfer' editing and involves deacylation of mischarged Val-tRNA(Ile). In Hahella chejuensis (strain KCTC 2396), this protein is Isoleucine--tRNA ligase.